Reading from the N-terminus, the 350-residue chain is Methionine aminopeptidase 1D, chloroplastic/mitochondrial (350 aa).

A chloroplast and mitochondrion-targeting transit peptide spans 1–49 (MAGVKSLQPRLISSFLGNNSIRSTQPLIHLFRFDLGRRHVSMQLSRTFS). Gly50 is modified (N-acetylglycine). The segment at 71–90 (RLRPGNVSPRRPVPGHITKP) is disordered. His180 is a substrate binding site. A divalent metal cation contacts are provided by Asp197, Asp208, and His271. His278 serves as a coordination point for substrate. Glu303 and Glu334 together coordinate a divalent metal cation.

The protein belongs to the peptidase M24A family. Methionine aminopeptidase type 1 subfamily. It depends on Co(2+) as a cofactor. Zn(2+) serves as cofactor. The cofactor is Mn(2+). Fe(2+) is required as a cofactor. In terms of tissue distribution, ubiquitous. Preferentially expressed in green tissues.

The protein localises to the plastid. Its subcellular location is the chloroplast. It localises to the mitochondrion. The catalysed reaction is Release of N-terminal amino acids, preferentially methionine, from peptides and arylamides.. In terms of biological role, removes the N-terminal methionine from nascent proteins. The N-terminal methionine is often cleaved when the second residue in the primary sequence is small and uncharged (Met-Ala-, Cys, Gly, Pro, Ser, Thr, or Val). The polypeptide is Methionine aminopeptidase 1D, chloroplastic/mitochondrial (MAP1D) (Arabidopsis thaliana (Mouse-ear cress)).